The primary structure comprises 305 residues: Ribonucleoside-diphosphate reductase small subunit (305 aa).

Residues Glu64, Glu94, and His97 each contribute to the Fe cation site. Tyr101 is a catalytic residue. A helical transmembrane segment spans residues 150-170 (VLIFYLIEGVFFISSFYCIGL). Positions 157, 191, and 194 each coordinate Fe cation.

The protein belongs to the ribonucleoside diphosphate reductase small chain family. In terms of assembly, heterotetramer composed of a homodimer of the large subunit (R1) and a homodimer of the small subunit (R2). Larger multisubunit protein complex are also active, composed of (R1)n(R2)n. Fe cation is required as a cofactor.

Its subcellular location is the host membrane. The catalysed reaction is a 2'-deoxyribonucleoside 5'-diphosphate + [thioredoxin]-disulfide + H2O = a ribonucleoside 5'-diphosphate + [thioredoxin]-dithiol. Its function is as follows. Ribonucleoside-diphosphate reductase holoenzyme provides the precursors necessary for viral DNA synthesis. Allows virus growth in non-dividing cells, as well as reactivation from latency in infected hosts. Catalyzes the biosynthesis of deoxyribonucleotides from the corresponding ribonucleotides. The sequence is that of Ribonucleoside-diphosphate reductase small subunit from Alcelaphine herpesvirus 1 (strain C500) (AlHV-1).